The sequence spans 571 residues: 2-succinyl-5-enolpyruvyl-6-hydroxy-3-cyclohexene-1-carboxylate synthase (571 aa).

Belongs to the TPP enzyme family. MenD subfamily. Homodimer. Mg(2+) is required as a cofactor. The cofactor is Mn(2+). Thiamine diphosphate serves as cofactor.

It catalyses the reaction isochorismate + 2-oxoglutarate + H(+) = 5-enolpyruvoyl-6-hydroxy-2-succinyl-cyclohex-3-ene-1-carboxylate + CO2. It participates in quinol/quinone metabolism; 1,4-dihydroxy-2-naphthoate biosynthesis; 1,4-dihydroxy-2-naphthoate from chorismate: step 2/7. The protein operates within quinol/quinone metabolism; menaquinone biosynthesis. Catalyzes the thiamine diphosphate-dependent decarboxylation of 2-oxoglutarate and the subsequent addition of the resulting succinic semialdehyde-thiamine pyrophosphate anion to isochorismate to yield 2-succinyl-5-enolpyruvyl-6-hydroxy-3-cyclohexene-1-carboxylate (SEPHCHC). The polypeptide is 2-succinyl-5-enolpyruvyl-6-hydroxy-3-cyclohexene-1-carboxylate synthase (Lysinibacillus sphaericus (strain C3-41)).